The primary structure comprises 298 residues: ATP synthase gamma chain (298 aa).

It belongs to the ATPase gamma chain family. In terms of assembly, F-type ATPases have 2 components, CF(1) - the catalytic core - and CF(0) - the membrane proton channel. CF(1) has five subunits: alpha(3), beta(3), gamma(1), delta(1), epsilon(1). CF(0) has three main subunits: a, b and c.

Its subcellular location is the cell inner membrane. Produces ATP from ADP in the presence of a proton gradient across the membrane. The gamma chain is believed to be important in regulating ATPase activity and the flow of protons through the CF(0) complex. The polypeptide is ATP synthase gamma chain (Wolinella succinogenes (strain ATCC 29543 / DSM 1740 / CCUG 13145 / JCM 31913 / LMG 7466 / NCTC 11488 / FDC 602W) (Vibrio succinogenes)).